The primary structure comprises 168 residues: Putative apoptosis regulator A9 (168 aa).

The helical transmembrane segment at 143–162 threads the bilayer; it reads SAFYFLTAAASCLTLLLLYF.

Its subcellular location is the host membrane. In terms of biological role, suppresses apoptosis in host cell and thus facilitates production of progeny virions. This is Putative apoptosis regulator A9 (A9) from Alcelaphine herpesvirus 1 (strain C500) (AlHV-1).